Consider the following 61-residue polypeptide: Furostanol glycoside 26-O-beta-glucosidase (61 aa).

The Proton donor/acceptor role is filled by Asp33. Asp33 is a binding site for D-glucose.

It belongs to the glycosyl hydrolase 3 family. As to quaternary structure, monomer. In terms of processing, glycosylated. Expressed in petioles and leaves, but not in fruits.

It catalyses the reaction protodioscin + H2O = 26-deglucoprotodioscin + D-glucose. Inhibited by Hg(2+) and D-glucono-1,5-lactone. Beta-glucosidase highly specific for the cleavage of C-26-bound glucose moiety of furostanol glycosides torvosides A and H. Hydrolyzes only p-nitrophenyl-beta-glucoside, but not p-nitrophenyl-beta-D-fucoside, p-nitrophenyl-beta-L-fucoside, p-nitrophenyl-beta-D-xyloside, p-nitrophenyl-beta-D-galactoside, p-nitrophenyl-beta-D-NAc-glucosamine, p-nitrophenyl-beta-D-mannoside or any of the p-nitrophenyl-alpha-glycosides tested. The protein is Furostanol glycoside 26-O-beta-glucosidase of Solanum torvum (Turkey berry).